A 511-amino-acid chain; its full sequence is Pancreatic alpha-amylase (511 aa).

The signal sequence occupies residues Met1 to Ala15. Pyrrolidone carboxylic acid is present on Gln16. Disulfide bonds link Cys43–Cys101, Cys85–Cys130, and Cys156–Cys175. The Ca(2+) site is built by Asn115, Arg173, and Asp182. Chloride is bound at residue Arg210. Asp212 (nucleophile) is an active-site residue. His216 lines the Ca(2+) pocket. The active-site Proton donor is the Glu248. Residues Asn313 and Arg352 each coordinate chloride. 2 cysteine pairs are disulfide-bonded: Cys393/Cys399 and Cys465/Cys477. The N-linked (GlcNAc...) asparagine glycan is linked to Asn476.

This sequence belongs to the glycosyl hydrolase 13 family. In terms of assembly, monomer. Binds to the sea anemone inhibitor helianthamide. Ca(2+) serves as cofactor. Chloride is required as a cofactor. As to expression, detected in pancreas (at protein level).

It localises to the secreted. The protein resides in the extracellular space. The enzyme catalyses Endohydrolysis of (1-&gt;4)-alpha-D-glucosidic linkages in polysaccharides containing three or more (1-&gt;4)-alpha-linked D-glucose units.. This chain is Pancreatic alpha-amylase (AMY2A), found in Homo sapiens (Human).